An 872-amino-acid chain; its full sequence is HTH-type transcriptional regulator AlkS (872 aa).

The HTH luxR-type domain maps to 805–870; it reads LTNTQSTITI…RAVSEARLRG (66 aa). A DNA-binding region (H-T-H motif) is located at residues 829-848; it reads NKEIAERLLITEDTVKWHLK.

Its pathway is hydrocarbon metabolism; alkane degradation. Functionally, this protein activates the expression of AlkB1 in the presence of alkanes. The protein is HTH-type transcriptional regulator AlkS (alkS) of Alcanivorax borkumensis (strain ATCC 700651 / DSM 11573 / NCIMB 13689 / SK2).